The following is a 383-amino-acid chain: L-lactate dehydrogenase (383 aa).

Positions 1 to 380 constitute an FMN hydroxy acid dehydrogenase domain; the sequence is MIISSGNDYR…NTDCLVQAIK (380 aa). Tyr-24 lines the substrate pocket. Residues Ser-106 and Gln-127 each contribute to the FMN site. Tyr-129 provides a ligand contact to substrate. Residue Thr-155 coordinates FMN. Residue Arg-164 coordinates substrate. Lys-251 contributes to the FMN binding site. His-275 (proton acceptor) is an active-site residue. Substrate is bound at residue Arg-278. FMN is bound at residue 306–330; it reads DSGIRNGLDVVRMLALGADTVLLGR.

It belongs to the FMN-dependent alpha-hydroxy acid dehydrogenase family. Requires FMN as cofactor.

Its subcellular location is the cell inner membrane. The catalysed reaction is (S)-lactate + A = pyruvate + AH2. Its function is as follows. Catalyzes the conversion of L-lactate to pyruvate. Is coupled to the respiratory chain. The polypeptide is L-lactate dehydrogenase (Acinetobacter baumannii (strain SDF)).